The primary structure comprises 688 residues: Elongation factor G 2 (688 aa).

A tr-type G domain is found at 7–282; that stretch reads DSIRNIGIIS…AVAAYLPSPR (276 aa). GTP contacts are provided by residues 16–23, 80–84, and 134–137; these read SHIDAGKT, DTPGH, and NKMD.

Belongs to the TRAFAC class translation factor GTPase superfamily. Classic translation factor GTPase family. EF-G/EF-2 subfamily.

It localises to the cytoplasm. Catalyzes the GTP-dependent ribosomal translocation step during translation elongation. During this step, the ribosome changes from the pre-translocational (PRE) to the post-translocational (POST) state as the newly formed A-site-bound peptidyl-tRNA and P-site-bound deacylated tRNA move to the P and E sites, respectively. Catalyzes the coordinated movement of the two tRNA molecules, the mRNA and conformational changes in the ribosome. This is Elongation factor G 2 from Geobacter metallireducens (strain ATCC 53774 / DSM 7210 / GS-15).